The following is a 513-amino-acid chain: Mannosyl-oligosaccharide alpha-1,2-mannosidase 1B (513 aa).

Positions 1 to 21 (MHLPSLSLSLTALAIASPSAA) are cleaved as a signal peptide. N-linked (GlcNAc...) asparagine glycans are attached at residues N97, N117, N150, N184, N251, N322, N348, and N368. A disulfide bridge connects residues C334 and C363. Residue E377 is the Proton donor of the active site. Position 503 (T503) interacts with Ca(2+).

Belongs to the glycosyl hydrolase 47 family. In terms of assembly, monomer. Ca(2+) serves as cofactor. It depends on Mg(2+) as a cofactor.

The protein localises to the cytoplasmic vesicle lumen. It catalyses the reaction N(4)-(alpha-D-Man-(1-&gt;2)-alpha-D-Man-(1-&gt;2)-alpha-D-Man-(1-&gt;3)-[alpha-D-Man-(1-&gt;2)-alpha-D-Man-(1-&gt;3)-[alpha-D-Man-(1-&gt;2)-alpha-D-Man-(1-&gt;6)]-alpha-D-Man-(1-&gt;6)]-beta-D-Man-(1-&gt;4)-beta-D-GlcNAc-(1-&gt;4)-beta-D-GlcNAc)-L-asparaginyl-[protein] (N-glucan mannose isomer 9A1,2,3B1,2,3) + 4 H2O = N(4)-(alpha-D-Man-(1-&gt;3)-[alpha-D-Man-(1-&gt;3)-[alpha-D-Man-(1-&gt;6)]-alpha-D-Man-(1-&gt;6)]-beta-D-Man-(1-&gt;4)-beta-D-GlcNAc-(1-&gt;4)-beta-D-GlcNAc)-L-asparaginyl-[protein] (N-glucan mannose isomer 5A1,2) + 4 beta-D-mannose. The catalysed reaction is N(4)-(alpha-D-Man-(1-&gt;2)-alpha-D-Man-(1-&gt;2)-alpha-D-Man-(1-&gt;3)-[alpha-D-Man-(1-&gt;3)-[alpha-D-Man-(1-&gt;2)-alpha-D-Man-(1-&gt;6)]-alpha-D-Man-(1-&gt;6)]-beta-D-Man-(1-&gt;4)-beta-D-GlcNAc-(1-&gt;4)-beta-D-GlcNAc)-L-asparaginyl-[protein] (N-glucan mannose isomer 8A1,2,3B1,3) + 3 H2O = N(4)-(alpha-D-Man-(1-&gt;3)-[alpha-D-Man-(1-&gt;3)-[alpha-D-Man-(1-&gt;6)]-alpha-D-Man-(1-&gt;6)]-beta-D-Man-(1-&gt;4)-beta-D-GlcNAc-(1-&gt;4)-beta-D-GlcNAc)-L-asparaginyl-[protein] (N-glucan mannose isomer 5A1,2) + 3 beta-D-mannose. It participates in protein modification; protein glycosylation. Involved in the maturation of Asn-linked oligosaccharides. Progressively trims alpha-1,2-linked mannose residues from Man(9)GlcNAc(2) to produce Man(5)GlcNAc(2). This Aspergillus phoenicis (Aspergillus saitoi) protein is Mannosyl-oligosaccharide alpha-1,2-mannosidase 1B (mns1B).